Reading from the N-terminus, the 557-residue chain is MVLSDIEIANSVTMEPISKVANQLGIDEEALCLYGKYKAKIDARQLVALKDKPDGKLILVTAISPTPAGEGKTTTSVGLVDALSAIGKKAVIALREPSLGPVFGVKGGAAGGGHAQVVPMEDINLHFTGDFHAIGVANNLLAALIDNHIHHGNSLGIDSRRITWKRVVDMNDRQLRHIVDGLQGKVNGVPREDGYDITVASEIMAILCLSENISDLKARLEKIIIGYNYQGEPVTAKDLKAGGALAALLKDAIHPNLVQTLEHTPALIHGGPFANIAHGCNSVLATKLALKYGDYAVTEAGFGADLGAEKFIDIKCRMSGLRPAAVVLVATIRALKMHGGVPKANLATENVQAVVDGLPNLDKHLANIQDVYGLPVVVAINKFPLDTDAELQAVYDACDKRGVDVVISDVWANGGAGGRELAEKVVALAEQDNQFCFVYEEDDSIETKLTKIVTKVYGGKGIRLTPAAKRELADLERLGFGNYPICMAKTQYSFSDDAKKLGAPTDFTVTISNLKVSAGAGFIVALTGAIMTMPGLPKVPASETIDIDEEGNITGLF.

66–73 (TPAGEGKT) serves as a coordination point for ATP.

Belongs to the formate--tetrahydrofolate ligase family.

It carries out the reaction (6S)-5,6,7,8-tetrahydrofolate + formate + ATP = (6R)-10-formyltetrahydrofolate + ADP + phosphate. It functions in the pathway one-carbon metabolism; tetrahydrofolate interconversion. The protein is Formate--tetrahydrofolate ligase 2 of Streptococcus pyogenes serotype M28 (strain MGAS6180).